Reading from the N-terminus, the 682-residue chain is DNA-directed RNA polymerase subunit beta' (682 aa).

4 residues coordinate Zn(2+): C69, C71, C87, and C90. D489, D491, and D493 together coordinate Mg(2+).

This sequence belongs to the RNA polymerase beta' chain family. RpoC1 subfamily. In terms of assembly, in plastids the minimal PEP RNA polymerase catalytic core is composed of four subunits: alpha, beta, beta', and beta''. When a (nuclear-encoded) sigma factor is associated with the core the holoenzyme is formed, which can initiate transcription. It depends on Mg(2+) as a cofactor. Requires Zn(2+) as cofactor.

It localises to the plastid. Its subcellular location is the chloroplast. The catalysed reaction is RNA(n) + a ribonucleoside 5'-triphosphate = RNA(n+1) + diphosphate. Its function is as follows. DNA-dependent RNA polymerase catalyzes the transcription of DNA into RNA using the four ribonucleoside triphosphates as substrates. This chain is DNA-directed RNA polymerase subunit beta', found in Platanus occidentalis (Sycamore).